The sequence spans 481 residues: Velvet complex subunit B (481 aa).

Disordered stretches follow at residues 1-157 and 241-339; these read MNSA…YSKI and GTGA…NGYG. Composition is skewed to pro residues over residues 36-45, 53-62, and 96-112; these read HPPPPLPPPS, PPLPPPPSAP, and PYAP…QYPR. The region spanning 160-464 is the Velvet domain; sequence GSGWKYSLDV…ANQGIKIPIR (305 aa). Low complexity-rich tracts occupy residues 241-255 and 293-325; these read GTGA…TYSS and QQSY…SAEP.

It belongs to the velvet family. VelB subfamily. Component of the heterotrimeric velvet complex composed of laeA, veA and velB; VeA acting as a bridging protein between laeA and velB. Forms a heterodimeric complex with vosA; the formation of the velB-vosA complex is light-dependent.

Its subcellular location is the nucleus. The protein localises to the cytoplasm. Functionally, component of the velvet transcription factor complex that controls sexual/asexual developmental ratio in response to light, promoting sexual development in the darkness while stimulating asexual sporulation under illumination. The velvet complex acts as a global regulator for secondary metabolite gene expression. Component of the velB-VosA heterodimeric complex that plays a dual role in activating genes associated with spore maturation and repressing certain development-associated genes. The velB-VosA complex binds DNA through the DNA-binding domain of vosA that recognizes an 11-nucleotide consensus sequence 5'-CTGGCCGCGGC-3' consisting of two motifs in the promoters of key developmental regulatory genes. Controls the biosynthetic gene cluster for beauvericin, a depsipeptide mycotoxin that functions as a virulence determinant. Also regulates chromatin structure and transcription of siderophore biosynthetic genes and is required for infection of tomato plants. The polypeptide is Velvet complex subunit B (Fusarium oxysporum f. sp. lycopersici (strain 4287 / CBS 123668 / FGSC 9935 / NRRL 34936) (Fusarium vascular wilt of tomato)).